Consider the following 446-residue polypeptide: Probable glucuronosyltransferase Os04g0650300 (446 aa).

Residues 1–30 are Cytoplasmic-facing; it reads MKLPLLRPLWPMLSPAAGSPDSPPEPSKPS. Residues 31-51 traverse the membrane as a helical; Signal-anchor for type II membrane protein segment; it reads LPAAWLLLHALFCATSMAVGF. The Lumenal segment spans residues 52 to 446; that stretch reads RFSRLIVYLL…TTLLNTEGQH (395 aa). N-linked (GlcNAc...) asparagine glycosylation occurs at asparagine 87. Residues 425 to 446 form a disordered region; it reads QQDAKPETPLKRTTLLNTEGQH.

Belongs to the glycosyltransferase 43 family.

The protein resides in the golgi apparatus membrane. Its function is as follows. Involved in the synthesis of glucuronoxylan hemicellulose in secondary cell walls. This chain is Probable glucuronosyltransferase Os04g0650300, found in Oryza sativa subsp. japonica (Rice).